Consider the following 371-residue polypeptide: Alanine dehydrogenase (371 aa).

Arg15 and Lys75 together coordinate substrate. Catalysis depends on His96, which acts as the Proton donor/acceptor. NAD(+) is bound by residues Ser134, Asp198, Arg203, Ser220, 239–240, 267–270, Lys279, and 298–301; these read VL, VAID, and VANM. The Proton donor/acceptor role is filled by Asp270.

Belongs to the AlaDH/PNT family. The cofactor is Mg(2+).

It catalyses the reaction L-alanine + NAD(+) + H2O = pyruvate + NH4(+) + NADH + H(+). It participates in amino-acid degradation; L-alanine degradation via dehydrogenase pathway; NH(3) and pyruvate from L-alanine: step 1/1. In terms of biological role, catalyzes the reversible reductive amination of pyruvate to L-alanine. This Halomonas elongata (strain ATCC 33173 / DSM 2581 / NBRC 15536 / NCIMB 2198 / 1H9) protein is Alanine dehydrogenase.